Consider the following 264-residue polypeptide: 3-methyl-2-oxobutanoate hydroxymethyltransferase (264 aa).

The Mg(2+) site is built by Asp-45 and Asp-84. 3-methyl-2-oxobutanoate contacts are provided by residues 45-46 (DS), Asp-84, and Lys-112. Glu-114 contacts Mg(2+). Glu-181 acts as the Proton acceptor in catalysis.

This sequence belongs to the PanB family. In terms of assembly, homodecamer; pentamer of dimers. The cofactor is Mg(2+).

It is found in the cytoplasm. The catalysed reaction is 3-methyl-2-oxobutanoate + (6R)-5,10-methylene-5,6,7,8-tetrahydrofolate + H2O = 2-dehydropantoate + (6S)-5,6,7,8-tetrahydrofolate. It functions in the pathway cofactor biosynthesis; (R)-pantothenate biosynthesis; (R)-pantoate from 3-methyl-2-oxobutanoate: step 1/2. Catalyzes the reversible reaction in which hydroxymethyl group from 5,10-methylenetetrahydrofolate is transferred onto alpha-ketoisovalerate to form ketopantoate. The protein is 3-methyl-2-oxobutanoate hydroxymethyltransferase of Shewanella oneidensis (strain ATCC 700550 / JCM 31522 / CIP 106686 / LMG 19005 / NCIMB 14063 / MR-1).